We begin with the raw amino-acid sequence, 352 residues long: C-C chemokine receptor type 5 (352 aa).

Residues 1-30 (MDYQVSSPTYDIDYYTSEPCQKINVKQIAA) lie on the Extracellular side of the membrane. Tyr-3 bears the Sulfotyrosine mark. Residues Ser-6 and Ser-7 are each glycosylated (O-linked (GalNAc...) serine). 3 positions are modified to sulfotyrosine: Tyr-10, Tyr-14, and Tyr-15. 2 disulfides stabilise this stretch: Cys-20–Cys-269 and Cys-101–Cys-178. Residues 31 to 58 (RLLPPLYSLVFIFGFVGNILVVLILINC) traverse the membrane as a helical segment. Residues 59–68 (KRLKSMTDIY) lie on the Cytoplasmic side of the membrane. Residues 69-89 (LLNLAISDLLFLLTVPFWAHY) form a helical membrane-spanning segment. Residues 90–102 (AAAQWDFGNTMCQ) lie on the Extracellular side of the membrane. A helical membrane pass occupies residues 103-124 (LLTGLYFIGFFSGIFFIILLTI). Topologically, residues 125–141 (DRYLAIVHAVFALKART) are cytoplasmic. A helical transmembrane segment spans residues 142–166 (VTFGVVTSVITWVVAVFASLPGIIF). At 167–198 (TRSQREGLHYTCSSHFPYSQYQFWKNFQTLKM) the chain is on the extracellular side. A helical transmembrane segment spans residues 199 to 218 (VILGLVLPLLVMVICYSGIL). The Cytoplasmic portion of the chain corresponds to 219 to 235 (KTLLRCRNEKKRHRAVR). The chain crosses the membrane as a helical span at residues 236 to 260 (LIFTIMIVYFLFWAPYNIVLLLNTF). The Extracellular portion of the chain corresponds to 261-277 (QEFFGLNNCSSSNRLDQ). A helical transmembrane segment spans residues 278–301 (AMQVTETLGMTHCCINPIIYAFVG). At 302–352 (EKFRNYLLVFFQKHIAKRFCKCCSIFQQEAPERASSVYTRSTGEQEISVGL) the chain is on the cytoplasmic side. 3 S-palmitoyl cysteine lipidation sites follow: Cys-321, Cys-323, and Cys-324. Residues Ser-336, Ser-337, Ser-342, and Ser-349 each carry the phosphoserine; by BARK1 modification.

The protein belongs to the G-protein coupled receptor 1 family. As to quaternary structure, interacts with PRAF2. Efficient ligand binding to CCL3/MIP-1alpha and CCL4/MIP-1beta requires sulfation, O-glycosylation and sialic acid modifications. Glycosylation on Ser-6 is required for efficient binding of CCL4. Interacts with GRK2. Interacts with ARRB1 and ARRB2. Interacts with CNIH4. Interacts with S100A4; this interaction stimulates T-lymphocyte chemotaxis. Sulfated on at least 2 of the N-terminal tyrosines. Sulfation is required for efficient binding of the chemokines, CCL3 and CCL4. Post-translationally, palmitoylation in the C-terminal is important for cell surface expression. In terms of processing, phosphorylation on serine residues in the C-terminal is stimulated by binding CC chemokines especially by APO-RANTES. O-glycosylated, but not N-glycosylated. Ser-6 appears to be the major site even if Ser-7 may be also O-glycosylated. Also sialylated glycans present which contribute to chemokine binding. Thr-16 and Ser-17 may also be glycosylated and, if so, with small moieties such as a T-antigen.

It localises to the cell membrane. Its function is as follows. Receptor for a number of inflammatory CC-chemokines including CCL3/MIP-1-alpha, CCL4/MIP-1-beta and RANTES and subsequently transduces a signal by increasing the intracellular calcium ion level. May play a role in the control of granulocytic lineage proliferation or differentiation. Participates in T-lymphocyte migration to the infection site by acting as a chemotactic receptor. This chain is C-C chemokine receptor type 5 (CCR5), found in Macaca fascicularis (Crab-eating macaque).